We begin with the raw amino-acid sequence, 83 residues long: Aminoacyl carrier protein (83 aa).

One can recognise a Carrier domain in the interval 1–80 (MNATIREILA…DTVKLILDGK (80 aa)). Serine 35 is modified (O-(pantetheine 4'-phosphoryl)serine).

4'-phosphopantetheine is transferred from CoA to a specific serine of the apo-form of this carrier protein.

Its function is as follows. Aminoacyl carrier protein. Can be charged with L-alanine, L-glycine or L-serine, via the formation of a thioester bond between the amino acid and the 4'-phosphopantetheinyl prosthetic group, catalyzed by the Atu2573 ligase. This chain is Aminoacyl carrier protein, found in Agrobacterium fabrum (strain C58 / ATCC 33970) (Agrobacterium tumefaciens (strain C58)).